Here is a 933-residue protein sequence, read N- to C-terminus: 2-oxoglutarate dehydrogenase E1 component (933 aa).

Belongs to the alpha-ketoglutarate dehydrogenase family. As to quaternary structure, homodimer. Part of the 2-oxoglutarate dehydrogenase (OGDH) complex composed of E1 (2-oxoglutarate dehydrogenase), E2 (dihydrolipoamide succinyltransferase) and E3 (dihydrolipoamide dehydrogenase); the complex contains multiple copies of the three enzymatic components (E1, E2 and E3). Interacts (via N-terminus) with SucB, the E2 component of OGDH complex. Thiamine diphosphate serves as cofactor.

The catalysed reaction is N(6)-[(R)-lipoyl]-L-lysyl-[protein] + 2-oxoglutarate + H(+) = N(6)-[(R)-S(8)-succinyldihydrolipoyl]-L-lysyl-[protein] + CO2. Its function is as follows. E1 component of the 2-oxoglutarate dehydrogenase (OGDH) complex which catalyzes the decarboxylation of 2-oxoglutarate, the first step in the conversion of 2-oxoglutarate to succinyl-CoA and CO(2). The sequence is that of 2-oxoglutarate dehydrogenase E1 component (sucA) from Escherichia coli O157:H7.